The primary structure comprises 771 residues: Probable exo-1,4-beta-xylosidase bxlB (771 aa).

An N-terminal signal peptide occupies residues 1–25; the sequence is MVGLTPQHYGNAIALMTYLASTALA. A glycan (N-linked (GlcNAc...) asparagine) is linked at Asn67. Residue Asp293 is part of the active site. Residues Asn305, Asn345, Asn423, Asn462, and Asn463 are each glycosylated (N-linked (GlcNAc...) asparagine).

This sequence belongs to the glycosyl hydrolase 3 family.

The protein resides in the secreted. The catalysed reaction is Hydrolysis of (1-&gt;4)-beta-D-xylans, to remove successive D-xylose residues from the non-reducing termini.. Its pathway is glycan degradation; xylan degradation. In terms of biological role, xylan 1,4-beta-xylosidase involved in the hydrolysis of xylan, a major structural heterogeneous polysaccharide found in plant biomass representing the second most abundant polysaccharide in the biosphere, after cellulose. This is Probable exo-1,4-beta-xylosidase bxlB (bxlB) from Aspergillus clavatus (strain ATCC 1007 / CBS 513.65 / DSM 816 / NCTC 3887 / NRRL 1 / QM 1276 / 107).